Here is an 82-residue protein sequence, read N- to C-terminus: Small ribosomal subunit protein bS18 (82 aa).

Positions 1–25 are disordered; that stretch reads MTEMNQTAIRRPFHRRRKTCPFSGT.

This sequence belongs to the bacterial ribosomal protein bS18 family. As to quaternary structure, part of the 30S ribosomal subunit. Forms a tight heterodimer with protein bS6.

Binds as a heterodimer with protein bS6 to the central domain of the 16S rRNA, where it helps stabilize the platform of the 30S subunit. This chain is Small ribosomal subunit protein bS18, found in Bartonella henselae (strain ATCC 49882 / DSM 28221 / CCUG 30454 / Houston 1) (Rochalimaea henselae).